The chain runs to 568 residues: Adenine deaminase (568 aa).

This sequence belongs to the metallo-dependent hydrolases superfamily. Adenine deaminase family. The cofactor is Mn(2+).

It carries out the reaction adenine + H2O + H(+) = hypoxanthine + NH4(+). In Clostridium perfringens (strain ATCC 13124 / DSM 756 / JCM 1290 / NCIMB 6125 / NCTC 8237 / Type A), this protein is Adenine deaminase.